The sequence spans 87 residues: UPF0250 protein YPK_3025 (87 aa).

This sequence belongs to the UPF0250 family.

This is UPF0250 protein YPK_3025 from Yersinia pseudotuberculosis serotype O:3 (strain YPIII).